The chain runs to 505 residues: Lysine--tRNA ligase (505 aa).

2 residues coordinate Mg(2+): E415 and E422.

Belongs to the class-II aminoacyl-tRNA synthetase family. Homodimer. It depends on Mg(2+) as a cofactor.

It localises to the cytoplasm. The catalysed reaction is tRNA(Lys) + L-lysine + ATP = L-lysyl-tRNA(Lys) + AMP + diphosphate. This Salmonella paratyphi C (strain RKS4594) protein is Lysine--tRNA ligase.